A 126-amino-acid chain; its full sequence is Large ribosomal subunit protein bL20c (126 aa).

This sequence belongs to the bacterial ribosomal protein bL20 family.

It localises to the plastid. The protein localises to the chloroplast. Binds directly to 23S ribosomal RNA and is necessary for the in vitro assembly process of the 50S ribosomal subunit. It is not involved in the protein synthesizing functions of that subunit. The chain is Large ribosomal subunit protein bL20c from Pelargonium hortorum (Common geranium).